We begin with the raw amino-acid sequence, 121 residues long: Ribonuclease P protein component (121 aa).

The protein belongs to the RnpA family. As to quaternary structure, consists of a catalytic RNA component (M1 or rnpB) and a protein subunit.

The catalysed reaction is Endonucleolytic cleavage of RNA, removing 5'-extranucleotides from tRNA precursor.. RNaseP catalyzes the removal of the 5'-leader sequence from pre-tRNA to produce the mature 5'-terminus. It can also cleave other RNA substrates such as 4.5S RNA. The protein component plays an auxiliary but essential role in vivo by binding to the 5'-leader sequence and broadening the substrate specificity of the ribozyme. This Neisseria meningitidis serogroup B (strain ATCC BAA-335 / MC58) protein is Ribonuclease P protein component.